The chain runs to 469 residues: Neuraminidase (469 aa).

Residues 1–12 (MNTNQRIITIGT) are Intravirion-facing. The tract at residues 11–33 (GTICLIVGIISLLLQIGNIILLW) is involved in apical transport and lipid raft association. The helical transmembrane segment at 13–33 (ICLIVGIISLLLQIGNIILLW) threads the bilayer. The Virion surface portion of the chain corresponds to 34–469 (MSHSIQTGEK…GADLPFTIDK (436 aa)). The interval 36-90 (HSIQTGEKSHPKVCNQSVITYENNTWVNQTYVNISNTNIAAGQGVTPIILAGNSS) is hypervariable stalk region. N-linked (GlcNAc...) asparagine; by host glycans are attached at residues Asn-50, Asn-58, Asn-63, Asn-68, and Asn-88. The segment at 91–469 (LCPISGWAIY…GADLPFTIDK (379 aa)) is head of neuraminidase. Cystine bridges form between Cys-92/Cys-417, Cys-124/Cys-129, Cys-184/Cys-231, Cys-233/Cys-238, Cys-279/Cys-292, Cys-281/Cys-290, Cys-318/Cys-335, and Cys-421/Cys-446. Arg-118 lines the substrate pocket. Asn-146 carries an N-linked (GlcNAc...) asparagine; by host glycan. Residue Asp-151 is the Proton donor/acceptor of the active site. Arg-152 contacts substrate. The N-linked (GlcNAc...) asparagine; by host glycan is linked to Asn-235. 277 to 278 (EE) serves as a coordination point for substrate. Arg-293 contacts substrate. Ca(2+) is bound by residues Asp-294, Asp-324, and Asn-344. Position 368 (Arg-368) interacts with substrate. The active-site Nucleophile is the Tyr-402.

The protein belongs to the glycosyl hydrolase 34 family. In terms of assembly, homotetramer. It depends on Ca(2+) as a cofactor. N-glycosylated.

It is found in the virion membrane. The protein localises to the host apical cell membrane. It carries out the reaction Hydrolysis of alpha-(2-&gt;3)-, alpha-(2-&gt;6)-, alpha-(2-&gt;8)- glycosidic linkages of terminal sialic acid residues in oligosaccharides, glycoproteins, glycolipids, colominic acid and synthetic substrates.. Inhibited by the neuraminidase inhibitors zanamivir (Relenza) and oseltamivir (Tamiflu). These drugs interfere with the release of progeny virus from infected cells and are effective against all influenza strains. Resistance to neuraminidase inhibitors is quite rare. Functionally, catalyzes the removal of terminal sialic acid residues from viral and cellular glycoconjugates. Cleaves off the terminal sialic acids on the glycosylated HA during virus budding to facilitate virus release. Additionally helps virus spread through the circulation by further removing sialic acids from the cell surface. These cleavages prevent self-aggregation and ensure the efficient spread of the progeny virus from cell to cell. Otherwise, infection would be limited to one round of replication. Described as a receptor-destroying enzyme because it cleaves a terminal sialic acid from the cellular receptors. May facilitate viral invasion of the upper airways by cleaving the sialic acid moieties on the mucin of the airway epithelial cells. Likely to plays a role in the budding process through its association with lipid rafts during intracellular transport. May additionally display a raft-association independent effect on budding. Plays a role in the determination of host range restriction on replication and virulence. Sialidase activity in late endosome/lysosome traffic seems to enhance virus replication. The polypeptide is Neuraminidase (Influenza A virus (strain A/New Jersey/8/1976 H1N1)).